Here is a 229-residue protein sequence, read N- to C-terminus: Urease accessory protein UreG (229 aa).

24–31 contacts GTP; the sequence is GPVGSGKT.

Belongs to the SIMIBI class G3E GTPase family. UreG subfamily. Homodimer. UreD, UreF and UreG form a complex that acts as a GTP-hydrolysis-dependent molecular chaperone, activating the urease apoprotein by helping to assemble the nickel containing metallocenter of UreC. The UreE protein probably delivers the nickel.

The protein resides in the cytoplasm. In terms of biological role, facilitates the functional incorporation of the urease nickel metallocenter. This process requires GTP hydrolysis, probably effectuated by UreG. The chain is Urease accessory protein UreG from Albidiferax ferrireducens (strain ATCC BAA-621 / DSM 15236 / T118) (Rhodoferax ferrireducens).